A 457-amino-acid chain; its full sequence is DNA repair protein RadA (457 aa).

A C4-type zinc finger spans residues 12–29 (CQACGYESAKWMGKCPNC). 97–104 (GDPGIGKS) serves as a coordination point for ATP. A RadA KNRFG motif motif is present at residues 254–258 (KNRFG). Residues 353–457 (DAYLKAAGGV…GEALKKALPD (105 aa)) are lon-protease-like.

Belongs to the RecA family. RadA subfamily.

Functionally, DNA-dependent ATPase involved in processing of recombination intermediates, plays a role in repairing DNA breaks. Stimulates the branch migration of RecA-mediated strand transfer reactions, allowing the 3' invading strand to extend heteroduplex DNA faster. Binds ssDNA in the presence of ADP but not other nucleotides, has ATPase activity that is stimulated by ssDNA and various branched DNA structures, but inhibited by SSB. Does not have RecA's homology-searching function. The protein is DNA repair protein RadA of Listeria monocytogenes serovar 1/2a (strain ATCC BAA-679 / EGD-e).